Consider the following 281-residue polypeptide: NAD kinase (281 aa).

Asp-61 serves as the catalytic Proton acceptor. NAD(+)-binding positions include 61-62 (DG), 134-135 (ND), Arg-145, Asp-164, 175-180 (TAYSLS), and Gln-234.

This sequence belongs to the NAD kinase family. Requires a divalent metal cation as cofactor.

It localises to the cytoplasm. The enzyme catalyses NAD(+) + ATP = ADP + NADP(+) + H(+). Involved in the regulation of the intracellular balance of NAD and NADP, and is a key enzyme in the biosynthesis of NADP. Catalyzes specifically the phosphorylation on 2'-hydroxyl of the adenosine moiety of NAD to yield NADP. This is NAD kinase from Clostridium botulinum (strain 657 / Type Ba4).